The primary structure comprises 323 residues: tRNA U34 carboxymethyltransferase (323 aa).

Residues Lys91, Trp105, Lys110, Gly130, Asp152–Thr154, Ile181–Glu182, Met196, Tyr200, and Arg315 contribute to the carboxy-S-adenosyl-L-methionine site.

The protein belongs to the class I-like SAM-binding methyltransferase superfamily. CmoB family. In terms of assembly, homotetramer.

It catalyses the reaction carboxy-S-adenosyl-L-methionine + 5-hydroxyuridine(34) in tRNA = 5-carboxymethoxyuridine(34) in tRNA + S-adenosyl-L-homocysteine + H(+). Catalyzes carboxymethyl transfer from carboxy-S-adenosyl-L-methionine (Cx-SAM) to 5-hydroxyuridine (ho5U) to form 5-carboxymethoxyuridine (cmo5U) at position 34 in tRNAs. This Escherichia coli O6:H1 (strain CFT073 / ATCC 700928 / UPEC) protein is tRNA U34 carboxymethyltransferase.